A 182-amino-acid chain; its full sequence is Ribosome maturation factor RimM (182 aa).

The PRC barrel domain occupies 102–182 (GEGDYYWKDL…TIEVDWDPGF (81 aa)).

The protein belongs to the RimM family. As to quaternary structure, binds ribosomal protein uS19.

The protein localises to the cytoplasm. In terms of biological role, an accessory protein needed during the final step in the assembly of 30S ribosomal subunit, possibly for assembly of the head region. Essential for efficient processing of 16S rRNA. May be needed both before and after RbfA during the maturation of 16S rRNA. It has affinity for free ribosomal 30S subunits but not for 70S ribosomes. The polypeptide is Ribosome maturation factor RimM (Pectobacterium carotovorum subsp. carotovorum (strain PC1)).